Reading from the N-terminus, the 519-residue chain is Cytochrome P450 monooxygenase FPY7 (519 aa).

Residues 12-34 (SLSLRWKIIVTLLAIYTLRIIGT) form a helical membrane-spanning segment. Cys465 serves as a coordination point for heme.

This sequence belongs to the cytochrome P450 family. Requires heme as cofactor.

It localises to the membrane. Its pathway is secondary metabolite biosynthesis. Cytochrome P450 monooxygenase; part of the gene cluster that mediates the biosynthesis of the gamma-pyrones fusapyrone (FPY) and deoxyfusapyrone (dFPY). FPY is an undecaketide and thus likely synthesized by the polyketide synthase FPY1 from acetyl-CoA functioning as starter unit and the addition of 10 malonyl-CoA extender units by successive Claisen-condensations. Next to this, FPY shares some rare features: C-glycosylated 4-deoxyglucose at C-3, a gem-dimethyl group at C-13, and an alpha-beta to beta-gamma double bond shift at C-20. During FPY biosynthesis mono-C-methyl groups are transferred to the tetra-, penta-, hexa- and heptaketide, while two C-methyl groups are transferred to the nonaketide, suggesting that the CMet domain is programmed to selectively catalyze two successive C-alpha-methylation reactions of the nonaketide, while other alpha-carbons are non- or mono-methylated only. While the origin of the 4'-deoxyglucose moiety remains opaque, its transfer to C-3 is most likely mediated by the C-glycosyltransferase FPY2. Next to this, the hydroxyl group present at C-33 and discriminating between FPY and dFPY, is likely to be installed by the cytochrome P450 monooxygenase FPY7. No putative function can be predicted for the remaining genes FPY3-FPY6. This Fusarium mangiferae (Mango malformation disease fungus) protein is Cytochrome P450 monooxygenase FPY7.